A 60-amino-acid chain; its full sequence is Beta-defensin 8 (60 aa).

The first 22 residues, 1–22 (MRIHYLLFTFLLVLLSPLAAFS), serve as a signal peptide directing secretion. A propeptide spanning residues 23 to 25 (QKI) is cleaved from the precursor. Disulfide bonds link C31–C58, C38–C52, and C42–C59.

This sequence belongs to the beta-defensin family. As to expression, most highly expressed in testis and heart.

The protein resides in the secreted. Its function is as follows. A synthetic peptide displays antimicrobial activities against S.aureus, P.aeruginosa, E.coli and B.cepacia. The antimicrobial activity against S.aureus, E.coli and B.cepacia is reduced in raised concentration of NaCl, but its action against P.aeruginosa is independent of NaCl concentration. The chain is Beta-defensin 8 (Defb8) from Mus musculus (Mouse).